An 835-amino-acid polypeptide reads, in one-letter code: Microcephalin (835 aa).

The region spanning Met1–Ala93 is the BRCT 1 domain. Phosphoserine is present on residues Ser279, Ser287, Ser296, and Ser333. 2 disordered regions span residues Leu332 to Ser376 and Ser417 to Phe442. A Phosphothreonine modification is found at Thr335. Residues Leu343–His361 are compositionally biased toward basic residues. Ser548 bears the Phosphoserine mark. The segment at Ala555–Glu583 is disordered. A compositionally biased stretch (polar residues) spans Lys559–Glu577. BRCT domains are found at residues Ser640–Leu730 and Tyr751–Leu833.

Interacts with CDC27 and maybe other components of the APC/C complex. Interacts with histone variant H2AX under DNA damage conditions.

It localises to the cytoplasm. The protein resides in the cytoskeleton. It is found in the microtubule organizing center. Its subcellular location is the centrosome. Its function is as follows. Implicated in chromosome condensation and DNA damage induced cellular responses. May play a role in neurogenesis and regulation of the size of the cerebral cortex. The protein is Microcephalin of Pan troglodytes (Chimpanzee).